The following is a 244-amino-acid chain: Probable metallo-hydrolase YhfI (244 aa).

Zn(2+)-binding residues include His59, His61, Asp63, His64, His134, Asp155, and His211.

Belongs to the metallo-beta-lactamase superfamily. It depends on Zn(2+) as a cofactor.

The polypeptide is Probable metallo-hydrolase YhfI (yhfI) (Bacillus subtilis (strain 168)).